The sequence spans 306 residues: Abnormal cell migration protein 21 (306 aa).

2 consecutive TSP type-1 domains span residues 55-102 (PGGW…AISS) and 109-155 (FGSW…DECP). 2 C-linked (Man) tryptophan glycosylation sites follow: Trp58 and Trp61. Intrachain disulfides connect Cys121–Cys149, Cys123–Cys154, and Cys134–Cys139. A helical membrane pass occupies residues 240-260 (CLPLHFAIPIFCFCILTGFLL).

Post-translationally, glycosylated via C-mannosylation by dpy-19 at Trp-58 and Trp-61.

The protein resides in the membrane. Functionally, required for determination of left/right asymmetry in nervous system. Acts together with unc-40 to control an initial left-right asymmetric polarization of the Q neuroblasts. Mig-21 and unc-40 may control the asymmetry in Wnt signaling response by restricting posterior polarization to one of the 2 Q neuroblasts. Involved in left-side QL posterior migration. In right-side QR, unc-40 and mig-21 pathways mutually inhibit each other in posterior migration, allowing anterior QR migration. This Caenorhabditis elegans protein is Abnormal cell migration protein 21 (mig-21).